We begin with the raw amino-acid sequence, 577 residues long: MNIQALINDKVSQALEAAGAPAGSPAAVRQSAKPQFGDYQANGVMGVAKKLGTNPREFAQKVLDVLDLDGIASKTEIAGPGFINIFLSEEFLAKQADAALADSRLGVAAEEAQTIVADYSAPNVAKEMHVGHLRSTIIGDAVVRTLEFLGHKVIRANHIGDWGTQFGMLIANLERVQQESGEVSMELADLEGFYRESKKLYDEDEEFAVKARNYVVKLQSGDEFCAEMWKKLVDVTMIQNQRNYDRLNVSLTRDDVMGESMYNDMLPKIVADLKAQGLAVEDDGAQVVFLEEFKNKDGEAMGVIVQKRDGGFLYTTTDIACAKYRYEELGADRVLYFIDSRQHQHLMQAWTIVRKAGYVPESVSLEHHAFGMMLGKDGKPFKTRAGGTVRLADLLDEAEVRAAQLIESKNPELDAEEKEKISKTVAMAAVKYSDLSKHRTTDYVFDWDNMLAFEGNTAPYMQYAYTRVASIFAKAGVAMDELQGDIQITDEKEKALIAKLLQFEEAVQSVAREGQPHIMCSYLFELAGQFSSFYEACPILVAEDEAVKQSRLKLAALTAKTIKQGLSLLGIETLERM.

The 'HIGH' region motif lies at proline 122–histidine 132.

It belongs to the class-I aminoacyl-tRNA synthetase family. In terms of assembly, monomer.

It is found in the cytoplasm. It catalyses the reaction tRNA(Arg) + L-arginine + ATP = L-arginyl-tRNA(Arg) + AMP + diphosphate. The polypeptide is Arginine--tRNA ligase (Vibrio parahaemolyticus serotype O3:K6 (strain RIMD 2210633)).